The following is a 214-amino-acid chain: Dephospho-CoA kinase (214 aa).

The region spanning 3-202 (KIGLTGGIGS…DRWLALAGAA (200 aa)) is the DPCK domain. 11 to 16 (GSGKSR) is a binding site for ATP.

The protein belongs to the CoaE family.

It is found in the cytoplasm. It catalyses the reaction 3'-dephospho-CoA + ATP = ADP + CoA + H(+). It participates in cofactor biosynthesis; coenzyme A biosynthesis; CoA from (R)-pantothenate: step 5/5. Its function is as follows. Catalyzes the phosphorylation of the 3'-hydroxyl group of dephosphocoenzyme A to form coenzyme A. This chain is Dephospho-CoA kinase, found in Bordetella pertussis (strain Tohama I / ATCC BAA-589 / NCTC 13251).